A 455-amino-acid chain; its full sequence is Probable pectate lyase 6 (455 aa).

The first 25 residues, 1 to 25 (MVNLGSYVFVFVALSLTVVVPSVQA), serve as a signal peptide directing secretion. N-linked (GlcNAc...) asparagine glycans are attached at residues Asn-55 and Asn-75. Ca(2+) contacts are provided by Asp-247, Asp-271, and Asp-275. The active site involves Arg-327.

It belongs to the polysaccharide lyase 1 family. Ca(2+) is required as a cofactor.

The catalysed reaction is Eliminative cleavage of (1-&gt;4)-alpha-D-galacturonan to give oligosaccharides with 4-deoxy-alpha-D-galact-4-enuronosyl groups at their non-reducing ends.. It participates in glycan metabolism; pectin degradation; 2-dehydro-3-deoxy-D-gluconate from pectin: step 2/5. The polypeptide is Probable pectate lyase 6 (Arabidopsis thaliana (Mouse-ear cress)).